The primary structure comprises 128 residues: Large ribosomal subunit protein bL17 (128 aa).

Belongs to the bacterial ribosomal protein bL17 family. Part of the 50S ribosomal subunit. Contacts protein L32.

This chain is Large ribosomal subunit protein bL17, found in Streptococcus pneumoniae serotype 2 (strain D39 / NCTC 7466).